We begin with the raw amino-acid sequence, 116 residues long: Iron-sulfur cluster insertion protein ErpA (116 aa).

Residues Cys44, Cys108, and Cys110 each coordinate iron-sulfur cluster.

It belongs to the HesB/IscA family. In terms of assembly, homodimer. The cofactor is iron-sulfur cluster.

Functionally, required for insertion of 4Fe-4S clusters for at least IspG. The sequence is that of Iron-sulfur cluster insertion protein ErpA from Aeromonas hydrophila subsp. hydrophila (strain ATCC 7966 / DSM 30187 / BCRC 13018 / CCUG 14551 / JCM 1027 / KCTC 2358 / NCIMB 9240 / NCTC 8049).